The sequence spans 129 residues: Small ribosomal subunit protein uS9 (129 aa).

This sequence belongs to the universal ribosomal protein uS9 family.

The chain is Small ribosomal subunit protein uS9 from Nitratiruptor sp. (strain SB155-2).